Here is a 198-residue protein sequence, read N- to C-terminus: Ribonuclease HII (198 aa).

The region spanning 14–198 (HMIVGVDEAG…FAPVAQLQLV (185 aa)) is the RNase H type-2 domain. Residues Asp-20, Glu-21, and Asp-110 each contribute to the a divalent metal cation site.

This sequence belongs to the RNase HII family. Mn(2+) is required as a cofactor. The cofactor is Mg(2+).

The protein localises to the cytoplasm. The enzyme catalyses Endonucleolytic cleavage to 5'-phosphomonoester.. In terms of biological role, endonuclease that specifically degrades the RNA of RNA-DNA hybrids. This chain is Ribonuclease HII, found in Sphingopyxis alaskensis (strain DSM 13593 / LMG 18877 / RB2256) (Sphingomonas alaskensis).